A 141-amino-acid polypeptide reads, in one-letter code: Suppressor of RNA silencing (141 aa).

Short sequence motifs (bipartite nuclear localization signal) lie at residues 75 to 91 (RKRV…QIRR) and 111 to 128 (KKKF…RFLR). Residues 94–117 (AENMSATAKKSHNSKTSKKKFKED) form a disordered region. Over residues 102 to 113 (KKSHNSKTSKKK) the composition is skewed to basic residues.

The protein resides in the host cytoplasm. It is found in the host nucleus. Functionally, weak suppressor of RNA-mediated gene silencing, also known as post-transcriptional gene silencing (PTGS), a mechanism of plant viral defense that performs sequence-specific inhibition of viral mRNAs expression. This could be used by the virus to infect efficiently the host the meristem cells. The sequence is that of Suppressor of RNA silencing from Tobacco rattle virus (isolate PpK20) (TRV).